The following is a 210-amino-acid chain: ATP-dependent Clp protease proteolytic subunit (210 aa).

Ser106 functions as the Nucleophile in the catalytic mechanism. His131 is a catalytic residue.

It belongs to the peptidase S14 family. In terms of assembly, fourteen ClpP subunits assemble into 2 heptameric rings which stack back to back to give a disk-like structure with a central cavity, resembling the structure of eukaryotic proteasomes.

Its subcellular location is the cytoplasm. The catalysed reaction is Hydrolysis of proteins to small peptides in the presence of ATP and magnesium. alpha-casein is the usual test substrate. In the absence of ATP, only oligopeptides shorter than five residues are hydrolyzed (such as succinyl-Leu-Tyr-|-NHMec, and Leu-Tyr-Leu-|-Tyr-Trp, in which cleavage of the -Tyr-|-Leu- and -Tyr-|-Trp bonds also occurs).. In terms of biological role, cleaves peptides in various proteins in a process that requires ATP hydrolysis. Has a chymotrypsin-like activity. Plays a major role in the degradation of misfolded proteins. The protein is ATP-dependent Clp protease proteolytic subunit of Bartonella henselae (strain ATCC 49882 / DSM 28221 / CCUG 30454 / Houston 1) (Rochalimaea henselae).